A 136-amino-acid chain; its full sequence is Histone H3.3C (136 aa).

A disordered region spans residues 1-42 (MARTKQTARKSTGGKAPRKQLVTKAAKKCAPATGGVKKPHRY). An Asymmetric dimethylarginine; by PRMT6 modification is found at arginine 3. The residue at position 4 (threonine 4) is a Phosphothreonine; by HASPIN. Allysine; alternate is present on lysine 5. Lysine 5 carries the N6,N6,N6-trimethyllysine; alternate modification. An N6,N6-dimethyllysine; alternate modification is found at lysine 5. An N6-(2-hydroxyisobutyryl)lysine; alternate modification is found at lysine 5. Residue lysine 5 is modified to N6-acetyllysine; alternate. Residue lysine 5 is modified to N6-methyllysine; alternate. Glutamine 6 is subject to 5-glutamyl dopamine; alternate. At glutamine 6 the chain carries 5-glutamyl serotonin; alternate. At threonine 7 the chain carries Phosphothreonine; by PKC. Lysine 10 bears the N6-(2-hydroxyisobutyryl)lysine; alternate mark. The residue at position 10 (lysine 10) is an N6-lactoyllysine; alternate. Lysine 10 bears the N6-methylated lysine mark. An ADP-ribosylserine; alternate modification is found at serine 11. Phosphoserine; alternate; by AURKB, AURKC, RPS6KA3, RPS6KA4 and RPS6KA5 is present on serine 11. The residue at position 12 (threonine 12) is a Phosphothreonine; by PKC. An N6-(2-hydroxyisobutyryl)lysine; alternate modification is found at lysine 15. N6-lactoyllysine; alternate is present on lysine 15. N6-acetyllysine is present on lysine 15. At lysine 15 the chain carries N6-glutaryllysine; alternate. Arginine 18 is subject to Asymmetric dimethylarginine. N6-(2-hydroxyisobutyryl)lysine; alternate occurs at positions 19, 24, 28, and 37. Lysine 19 is subject to N6-acetyllysine; alternate. N6-lactoyllysine; alternate occurs at positions 19, 24, and 28. Lysine 19, lysine 24, and lysine 28 each carry N6-glutaryllysine; alternate. An N6-butyryllysine; alternate mark is found at lysine 19 and lysine 24. Lysine 19 bears the N6-methylated lysine; alternate mark. Position 24 is an N6-acetyllysine (lysine 24). An N6-acetyllysine; alternate mark is found at lysine 28 and lysine 37. N6-methylated lysine; alternate occurs at positions 28 and 37. The residue at position 42 (tyrosine 42) is a Phosphotyrosine. Lysine 57 carries the N6-(2-hydroxyisobutyryl)lysine; alternate modification. The residue at position 57 (lysine 57) is an N6-lactoyllysine; alternate. Lysine 57 carries the post-translational modification N6-glutaryllysine; alternate. Lysine 57 is subject to N6-succinyllysine; alternate. Serine 58 carries the post-translational modification Phosphoserine. An N6-(2-hydroxyisobutyryl)lysine; alternate mark is found at lysine 65 and lysine 80. Lysine 65 and lysine 80 each carry N6-methylated lysine. At lysine 80 the chain carries N6-lactoyllysine; alternate. Lysine 80 carries the N6-glutaryllysine; alternate modification. Residue lysine 80 is modified to N6-succinyllysine; alternate. A Phosphothreonine modification is found at threonine 81. N6-acetyllysine; alternate is present on residues lysine 116 and lysine 123. An N6-glutaryllysine; alternate mark is found at lysine 116 and lysine 123. An N6-(2-hydroxyisobutyryl)lysine; alternate modification is found at lysine 123. Lysine 123 is modified (N6-methylated lysine; alternate). At lysine 123 the chain carries N6-succinyllysine; alternate.

This sequence belongs to the histone H3 family. In terms of assembly, the nucleosome is a histone octamer containing two molecules each of H2A, H2B, H3 and H4 assembled in one H3-H4 heterotetramer and two H2A-H2B heterodimers. The octamer wraps approximately 147 bp of DNA. In terms of processing, acetylation is generally linked to gene activation. Acetylation on Lys-19 (H3K18ac) and Lys-24 (H3K24ac) favors methylation at Arg-18 (H3R17me). Acetylation at Lys-123 (H3K122ac) by EP300/p300 plays a central role in chromatin structure: localizes at the surface of the histone octamer and stimulates transcription, possibly by promoting nucleosome instability. Post-translationally, asymmetric dimethylation at Arg-18 (H3R17me2a) is linked to gene activation. Asymmetric dimethylation at Arg-3 (H3R2me2a) by PRMT6 is linked to gene repression and is mutually exclusive with H3 Lys-5 methylation (H3K4me2 and H3K4me3). H3R2me2a is present at the 3' of genes regardless of their transcription state and is enriched on inactive promoters, while it is absent on active promoters. Methylation at Lys-5 (H3K4me) and Lys-80 (H3K79me) are linked to gene activation. Methylation at Lys-5 (H3K4me) facilitates subsequent acetylation of H3 and H4. Methylation at Lys-80 (H3K79me) is associated with DNA double-strand break (DSB) responses and is a specific target for TP53BP1. Methylation at Lys-10 (H3K9me) and Lys-28 (H3K27me) are linked to gene repression. Methylation at Lys-10 (H3K9me) is a specific target for HP1 proteins (CBX1, CBX3 and CBX5) and prevents subsequent phosphorylation at Ser-11 (H3S10ph) and acetylation of H3 and H4. Methylation at Lys-5 (H3K4me) and Lys-80 (H3K79me) require preliminary monoubiquitination of H2B at 'Lys-120'. In terms of processing, phosphorylated at Thr-4 (H3T3ph) by HASPIN during prophase and dephosphorylated during anaphase. Phosphorylation at Ser-11 (H3S10ph) by aurkb is crucial for chromosome condensation and cell-cycle progression during mitosis and meiosis. In addition phosphorylation at Ser-11 (H3S10ph) by rps6ka4 and rps6ka5 is important during interphase because it enables the transcription of genes following external stimulation, like mitogens, stress, growth factors or UV irradiation and result in the activation of genes, such as c-fos and c-jun. Phosphorylation at Ser-11 (H3S10ph), which is linked to gene activation, prevents methylation at Lys-10 (H3K9me) but facilitates acetylation of H3 and H4. Phosphorylation at Ser-11 (H3S10ph) by aurkb mediates the dissociation of HP1 proteins (cbx1, cbx3 and cbx5) from heterochromatin. Phosphorylation at Ser-11 (H3S10ph) is also an essential regulatory mechanism for neoplastic cell transformation. Phosphorylation at Thr-7 (H3T6ph) by prkcb is a specific tag for epigenetic transcriptional activation that prevents demethylation of Lys-5 (H3K4me) by lsd1/kdm1a. At centromeres, specifically phosphorylated at Thr-12 (H3T11ph) from prophase to early anaphase, by DAPK3 and PKN1. Phosphorylation at Thr-12 (H3T11ph) by PKN1 or isoform M2 of PKM (PKM2) is a specific tag for epigenetic transcriptional activation that promotes demethylation of Lys-10 (H3K9me) by kdm4c/jmjd2c. Phosphorylation at Tyr-42 (H3Y41ph) by jak2 promotes exclusion of cbx5 (HP1 alpha) from chromatin. Post-translationally, lysine deamination at Lys-5 (H3K4all) to form allysine only takes place on H3K4me3 and results in gene repression. Butyrylation of histones marks active promoters and competes with histone acetylation. It is present during late spermatogenesis. In terms of processing, succinylation at Lys-80 (H3K79succ) by KAT2A takes place with a maximum frequency around the transcription start sites of genes. It gives a specific tag for epigenetic transcription activation. Desuccinylation at Lys-123 (H3K122succ) by SIRT7 in response to DNA damage promotes chromatin condensation and double-strand breaks (DSBs) repair. Post-translationally, serine ADP-ribosylation constitutes the primary form of ADP-ribosylation of proteins in response to DNA damage. Serine ADP-ribosylation at Ser-11 (H3S10ADPr) is mutually exclusive with phosphorylation at Ser-11 (H3S10ph) and impairs acetylation at Lys-10 (H3K9ac).

It is found in the nucleus. It localises to the chromosome. Core component of nucleosome. Nucleosomes wrap and compact DNA into chromatin, limiting DNA accessibility to the cellular machineries which require DNA as a template. Histones thereby play a central role in transcription regulation, DNA repair, DNA replication and chromosomal stability. DNA accessibility is regulated via a complex set of post-translational modifications of histones, also called histone code, and nucleosome remodeling. The polypeptide is Histone H3.3C (h3-5) (Xenopus laevis (African clawed frog)).